The sequence spans 172 residues: GTP-dependent dephospho-CoA kinase (172 aa).

GTP-binding residues include Asp-49, Val-50, Val-51, Asp-68, Lys-70, and Glu-120.

It belongs to the GTP-dependent DPCK family.

It carries out the reaction 3'-dephospho-CoA + GTP = GDP + CoA + H(+). The protein operates within cofactor biosynthesis; coenzyme A biosynthesis. In terms of biological role, catalyzes the GTP-dependent phosphorylation of the 3'-hydroxyl group of dephosphocoenzyme A to form coenzyme A (CoA). In Pyrobaculum arsenaticum (strain DSM 13514 / JCM 11321 / PZ6), this protein is GTP-dependent dephospho-CoA kinase.